The chain runs to 179 residues: CASP-like protein 1F1 (179 aa).

Over 1-16 (MENVEDKYNSPLKSQK) the chain is Cytoplasmic. Residues 17–37 (LFIGAQICLRIVTIGATLAAT) traverse the membrane as a helical segment. Residues 38–65 (WIMVTDKQSITFGDFVMVAKYNYSSAFK) are Extracellular-facing. N59 carries N-linked (GlcNAc...) asparagine glycosylation. A helical membrane pass occupies residues 66–86 (FFVLANVIACACSVVSLLFLC). At 87–105 (ALGRYSSNPGHVFLLFLHD) the chain is on the cytoplasmic side. A helical transmembrane segment spans residues 106–126 (LLMMSLVLAGCSAATAIGFLG). At 127–150 (KYGNTKSGWMPICDQFGQFCNRGT) the chain is on the extracellular side. A helical membrane pass occupies residues 151–171 (ISMMLSYLSMVCLLILTVTSA). Residues 172-179 (NKSRQIHV) are Cytoplasmic-facing.

This sequence belongs to the Casparian strip membrane proteins (CASP) family. As to quaternary structure, homodimer and heterodimers.

The protein resides in the cell membrane. This is CASP-like protein 1F1 from Ricinus communis (Castor bean).